A 212-amino-acid chain; its full sequence is Probable nicotinate-nucleotide adenylyltransferase (212 aa).

It belongs to the NadD family.

It carries out the reaction nicotinate beta-D-ribonucleotide + ATP + H(+) = deamido-NAD(+) + diphosphate. Its pathway is cofactor biosynthesis; NAD(+) biosynthesis; deamido-NAD(+) from nicotinate D-ribonucleotide: step 1/1. Its function is as follows. Catalyzes the reversible adenylation of nicotinate mononucleotide (NaMN) to nicotinic acid adenine dinucleotide (NaAD). The sequence is that of Probable nicotinate-nucleotide adenylyltransferase from Shewanella sp. (strain MR-4).